The primary structure comprises 375 residues: Cytochrome P450 monooxygenase ACRTS1 (375 aa).

Position 321 (C321) interacts with heme.

This sequence belongs to the cytochrome P450 family. It depends on heme as a cofactor.

Its pathway is mycotoxin biosynthesis. Cytochrome P450 monooxygenase; part of the gene cluster that mediates the biosynthesis of the host-selective toxins (HSTs) ACR-toxins responsible for brown spot of rough lemon disease by the rough lemon pathotype. ACR-toxins cause uncoupling of mitochondrial oxidative-phosphorylation similar to that of classic protonophore. The structure of the major form of ACR-toxin (ACR-toxin I) consists of an alpha-dihydropyrone ring in a 19-carbon polyalcohol, a typical polyketide structure. Minor toxins were characterized as having a pyrone ring with polyalcohol side chains different in length and showing weaker toxicity. The highly reducing polyketide synthase ACRTS2 has all necessary enzymatic domains for multiple cycles of condensation and beta-keto processing. The cytochrome P450 monooxygenase ACRTS1 has also been shown to be essential for ACR-toxin biosynthesis, however its exact role in the pathway has not been elucidated yet. This is Cytochrome P450 monooxygenase ACRTS1 from Alternaria alternata (Alternaria rot fungus).